The following is a 256-amino-acid chain: Phosphonates import ATP-binding protein PhnC (256 aa).

The 245-residue stretch at 7–251 folds into the ABC transporter domain; sequence IEMKNVTKVY…VFDNIYNGGK (245 aa). 40–47 provides a ligand contact to ATP; that stretch reads GLSGAGKS.

Belongs to the ABC transporter superfamily. Phosphonates importer (TC 3.A.1.9.1) family. The complex is composed of two ATP-binding proteins (PhnC), two transmembrane proteins (PhnE) and a solute-binding protein (PhnD).

The protein localises to the cell membrane. The enzyme catalyses phosphonate(out) + ATP + H2O = phosphonate(in) + ADP + phosphate + H(+). Its function is as follows. Part of the ABC transporter complex PhnCDE involved in phosphonates import. Responsible for energy coupling to the transport system. This is Phosphonates import ATP-binding protein PhnC from Lactobacillus delbrueckii subsp. bulgaricus (strain ATCC 11842 / DSM 20081 / BCRC 10696 / JCM 1002 / NBRC 13953 / NCIMB 11778 / NCTC 12712 / WDCM 00102 / Lb 14).